The following is a 525-amino-acid chain: Histidine-rich glycoprotein (525 aa).

Residues 1-18 form the signal peptide; the sequence is MKVLTTALLLVTLQCSHA. The 104-residue stretch at 19–122 folds into the Cystatin 1 domain; that stretch reads LSPTNCDASK…ESQDLSVNGY (104 aa). Cystine bridges form between Cys24–Cys504, Cys78–Cys89, Cys103–Cys124, Cys201–Cys414, and Cys216–Cys239. The tract at residues 41–84 is interaction with ATP5F1A; it reads GRRSGYTFQLLRVSDAHLDRVETATIYYLVLDVVESDCWVLSTK. Residues Asn112 and Asn123 are each glycosylated (N-linked (GlcNAc...) asparagine). In terms of domain architecture, Cystatin 2 spans 135-240; the sequence is NTKDSPVLVD…TPEYTDLICE (106 aa). Ser145 is modified (phosphoserine). The N-linked (GlcNAc...) asparagine glycan is linked to Asn200. A disordered region spans residues 275-445; it reads RDHHHTHKTH…GHSRKRGPGK (171 aa). 2 N-linked (GlcNAc...) asparagine glycosylation sites follow: Asn322 and Asn330. 2 stretches are compositionally biased toward basic residues: residues 339-392 and 426-443; these read HGQH…HGHH and QYHRGHGPPHGHSRKRGP. Ser438 carries the post-translational modification Phosphoserine.

In terms of assembly, interacts with THBS1 (via the TSP type I repeats); the interaction blocks the antiangiogenic effect of THBS1 with CD36. Interacts with HPSE; the interaction is enhanced at acidic pH, partially inhibits binding of HPSE to cell surface receptors and modulates its enzymatic activity. Interacts (via the HRR domain) with TMP1; the interaction partially mediates the antiangiogenic properties of HRG. Interacts with kappa and lambda light chains of IgG molecules. Interacts with ATP5F1A; the interaction occurs on the surface of T-cells and alters their cell morphology in concert with CONA. Binds IgG molecules containing kappa and lambda light chains and inhibits the formation of insoluble immunoglobulin complexes. Interacts with F12; the interaction, which is enhanced in the presence of zinc ions and inhibited by heparin-binding to HRG, inhibits factor XII autoactivation and contact-initiated coagulation. Interacts with PLG (via its Kringle domains); the interaction tethers PLG to the cell surface and enhances its activation. Interacts (via the HRR domain) with TPM1; the interaction appears to contribute to the antiangiogenic properties of the HRR domain. Interacts with THBS2; the interaction blocks the antiangiogenic effect of THBS2 with CD36. In terms of processing, N-glycosylated. Proteolytic cleavage produces several HRG fragments which are mostly disulfide-linked and, therefore, not released. Cleavage by plasmin is inhibited in the presence of heparin, zinc ions or in an acidic environment. Cleavage reduces binding of HRG to heparan sulfate, but enhances the ability of HRG to bind and tether plasminogen to the cell surface. On platelet activation, releases a 33 kDa antiangiogenic peptide which encompasses the HRR. Also cleaved in the C-terminal by plasmin. Expressed in liver, blood plasma, serum and in platelets. Also present in fibrin clots, wound fluid from acute wounds and chronic leg ulcers.

It localises to the secreted. Functionally, plasma glycoprotein that binds a number of ligands such as heme, heparin, heparan sulfate, thrombospondin, plasminogen, and divalent metal ions. Inhibits rosette formation. Acts as an adapter protein and implicated in regulating many processes such as immune complex and pathogen clearance, cell adhesion, angiogenesis, coagulation and fibrinolysis. Mediates clearance of necrotic cells through enhancing the phagocytosis of necrotic cells in a heparan sulfate-dependent pathway. This process can be regulated by the presence of certain HRG ligands such as heparin and zinc ions. Binds to IgG subclasses of immunoglobins containing kappa and lambda light chains with different affinities regulating their clearance and inhibiting the formation of insoluble immune complexes. Tethers plasminogen to the cell surface. Binds T-cells and alters the cell morphology. Modulates angiogenesis by blocking the CD6-mediated antiangiongenic effect of thrombospondins, THBS1 and THBS2. The chain is Histidine-rich glycoprotein (Hrg) from Rattus norvegicus (Rat).